Reading from the N-terminus, the 553-residue chain is CTP synthase (553 aa).

The segment at 1-270 is amidoligase domain; the sequence is MTKYVFVTGG…DELICEELKL (270 aa). Residue S13 participates in CTP binding. S13 contributes to the UTP binding site. ATP contacts are provided by residues 14-19 and D71; that span reads SLGKGI. The Mg(2+) site is built by D71 and E144. CTP-binding positions include 151–153, 191–196, and K227; these read DIE and KTKPTQ. UTP is bound by residues 191-196 and K227; that span reads KTKPTQ. The Glutamine amidotransferase type-1 domain maps to 295-547; sequence TIGMVGKYVE…VEAARAHHEA (253 aa). G356 provides a ligand contact to L-glutamine. C383 serves as the catalytic Nucleophile; for glutamine hydrolysis. Residues 384–387, E407, and R473 each bind L-glutamine; that span reads LGMQ. Catalysis depends on residues H520 and E522.

The protein belongs to the CTP synthase family. Homotetramer.

It carries out the reaction UTP + L-glutamine + ATP + H2O = CTP + L-glutamate + ADP + phosphate + 2 H(+). The catalysed reaction is L-glutamine + H2O = L-glutamate + NH4(+). The enzyme catalyses UTP + NH4(+) + ATP = CTP + ADP + phosphate + 2 H(+). It functions in the pathway pyrimidine metabolism; CTP biosynthesis via de novo pathway; CTP from UDP: step 2/2. Allosterically activated by GTP, when glutamine is the substrate; GTP has no effect on the reaction when ammonia is the substrate. The allosteric effector GTP functions by stabilizing the protein conformation that binds the tetrahedral intermediate(s) formed during glutamine hydrolysis. Inhibited by the product CTP, via allosteric rather than competitive inhibition. Its function is as follows. Catalyzes the ATP-dependent amination of UTP to CTP with either L-glutamine or ammonia as the source of nitrogen. Regulates intracellular CTP levels through interactions with the four ribonucleotide triphosphates. This chain is CTP synthase, found in Paraburkholderia phymatum (strain DSM 17167 / CIP 108236 / LMG 21445 / STM815) (Burkholderia phymatum).